A 386-amino-acid polypeptide reads, in one-letter code: Cell division protein FtsZ (386 aa).

GTP is bound by residues 20–24, 107–109, glutamate 138, arginine 142, and asparagine 186; these read GGGGN and GTG. The disordered stretch occupies residues 350–377; that stretch reads LNQEQKTAAKAVNEQNAQGSKEPDYLDI.

Belongs to the FtsZ family. In terms of assembly, homodimer. Polymerizes to form a dynamic ring structure in a strictly GTP-dependent manner. Interacts directly with several other division proteins.

Its subcellular location is the cytoplasm. Essential cell division protein that forms a contractile ring structure (Z ring) at the future cell division site. The regulation of the ring assembly controls the timing and the location of cell division. One of the functions of the FtsZ ring is to recruit other cell division proteins to the septum to produce a new cell wall between the dividing cells. Binds GTP and shows GTPase activity. The polypeptide is Cell division protein FtsZ (Sodalis glossinidius).